A 268-amino-acid chain; its full sequence is GTP cyclohydrolase FolE2 (268 aa).

The protein belongs to the GTP cyclohydrolase IV family.

It carries out the reaction GTP + H2O = 7,8-dihydroneopterin 3'-triphosphate + formate + H(+). Its pathway is cofactor biosynthesis; 7,8-dihydroneopterin triphosphate biosynthesis; 7,8-dihydroneopterin triphosphate from GTP: step 1/1. Converts GTP to 7,8-dihydroneopterin triphosphate. This chain is GTP cyclohydrolase FolE2, found in Janthinobacterium sp. (strain Marseille) (Minibacterium massiliensis).